The primary structure comprises 274 residues: NAD(P)H-quinone oxidoreductase subunit K, chloroplastic (274 aa).

Polar residues-rich tracts occupy residues 1 to 10 (MVINQKNLSS) and 18 to 27 (SGSQSSTKAD). A disordered region spans residues 1 to 27 (MVINQKNLSSPVAPYDKSGSQSSTKAD). [4Fe-4S] cluster is bound by residues cysteine 90, cysteine 91, cysteine 155, and cysteine 186.

Belongs to the complex I 20 kDa subunit family. As to quaternary structure, NDH is composed of at least 16 different subunits, 5 of which are encoded in the nucleus. [4Fe-4S] cluster is required as a cofactor.

The protein localises to the plastid. Its subcellular location is the chloroplast thylakoid membrane. It carries out the reaction a plastoquinone + NADH + (n+1) H(+)(in) = a plastoquinol + NAD(+) + n H(+)(out). The enzyme catalyses a plastoquinone + NADPH + (n+1) H(+)(in) = a plastoquinol + NADP(+) + n H(+)(out). NDH shuttles electrons from NAD(P)H:plastoquinone, via FMN and iron-sulfur (Fe-S) centers, to quinones in the photosynthetic chain and possibly in a chloroplast respiratory chain. The immediate electron acceptor for the enzyme in this species is believed to be plastoquinone. Couples the redox reaction to proton translocation, and thus conserves the redox energy in a proton gradient. The sequence is that of NAD(P)H-quinone oxidoreductase subunit K, chloroplastic from Chlorokybus atmophyticus (Soil alga).